The following is a 199-amino-acid chain: Putative acetyltransferase SACOL2570 (199 aa).

This sequence belongs to the transferase hexapeptide repeat family.

The chain is Putative acetyltransferase SACOL2570 from Staphylococcus aureus (strain COL).